Here is a 318-residue protein sequence, read N- to C-terminus: UDP-N-acetylenolpyruvoylglucosamine reductase (318 aa).

The FAD-binding PCMH-type domain maps to 38-204 (IGGICPVVVE…LGIEILLKEG (167 aa)). Residue R182 is part of the active site. Residues 212 to 232 (SLKDKRDRRNSSQPENKKSAG) form a disordered region. Residues 213–229 (LKDKRDRRNSSQPENKK) show a composition bias toward basic and acidic residues. S233 acts as the Proton donor in catalysis. E310 is a catalytic residue.

It belongs to the MurB family. FAD is required as a cofactor.

It is found in the cytoplasm. The catalysed reaction is UDP-N-acetyl-alpha-D-muramate + NADP(+) = UDP-N-acetyl-3-O-(1-carboxyvinyl)-alpha-D-glucosamine + NADPH + H(+). It functions in the pathway cell wall biogenesis; peptidoglycan biosynthesis. In terms of biological role, cell wall formation. This chain is UDP-N-acetylenolpyruvoylglucosamine reductase, found in Leptospira borgpetersenii serovar Hardjo-bovis (strain L550).